A 512-amino-acid polypeptide reads, in one-letter code: Kelch repeat protein C2 (512 aa).

Positions 2–67 (ESVIFSINGE…IRWKKINITI (66 aa)) constitute a BTB domain. Positions 102–176 (CIRMFNFSKR…LLKWIHKNPN (75 aa)) constitute a BACK domain. 6 Kelch repeats span residues 216–261 (IKHN…LHNC), 262–307 (LYII…VNDG), 309–354 (LYVI…FVND), 356–403 (IYVM…EYDG), 405–449 (IYVI…SCGD), and 452–498 (LIIA…THKS).

It belongs to the poxviruses Kelch family.

The polypeptide is Kelch repeat protein C2 (Vaccinia virus (strain Western Reserve) (VACV)).